A 627-amino-acid polypeptide reads, in one-letter code: (+)-sabinene synthase, chloroplastic (627 aa).

The N-terminal 46 residues, 1–46, are a transit peptide targeting the chloroplast; sequence MSVISIVPLASNSCLYKSLMSSTHELKALCRPIATLGMCRRGKSVM. Residues Asp378, Asp382, and Asp530 each coordinate Mg(2+). The DDXXD motif motif lies at 378-382; the sequence is DDIYD.

Belongs to the terpene synthase family. Tpsd subfamily. Monomer. Mg(2+) serves as cofactor.

It localises to the plastid. Its subcellular location is the chloroplast. It carries out the reaction (2E)-geranyl diphosphate = (1R,5R)-sabinene + diphosphate. It functions in the pathway terpene metabolism; oleoresin biosynthesis. Functionally, terpene synthase (TPS) involved in defensive oleoresin formation in conifers in response to insect attack (e.g. white pine weevil P.strobi) or other injury. Produces (+)-sabinene from geranyl diphosphate, but has no activity with geranylgeranyl diphosphate or farnesyl diphosphate. The chain is (+)-sabinene synthase, chloroplastic (TPS-sab) from Picea sitchensis (Sitka spruce).